The following is a 306-amino-acid chain: Secreted RxLR effector protein 76 (306 aa).

The first 21 residues, 1 to 21 (MSGAFYVFTALLLVASDQIAA), serve as a signal peptide directing secretion. The RxLR-dEER signature appears at 48 to 65 (RFLRGSRDEPDNLANEER). The interval 105-142 (AAKAVKKRPRGAKAGRKMPRAAEAEAVKKVPRAGTAVK) is disordered. Positions 107–123 (KAVKKRPRGAKAGRKMP) are enriched in basic residues.

It belongs to the RxLR effector family.

Its subcellular location is the secreted. The protein localises to the host nucleus. In terms of biological role, secreted effector that partially suppresses the host cell death induced by cell death-inducing proteins. The polypeptide is Secreted RxLR effector protein 76 (Plasmopara viticola (Downy mildew of grapevine)).